Reading from the N-terminus, the 311-residue chain is Thymidylate synthase (311 aa).

Residues Arg28 and 172-173 contribute to the dUMP site; that span reads RR. Cys192 (nucleophile) is an active-site residue. DUMP is bound by residues 213-216, Asn224, and 254-256; these read RSCD and HLY. A (6R)-5,10-methylene-5,6,7,8-tetrahydrofolate-binding site is contributed by Asp216. A (6R)-5,10-methylene-5,6,7,8-tetrahydrofolate-binding site is contributed by Ala310.

Belongs to the thymidylate synthase family. Bacterial-type ThyA subfamily. As to quaternary structure, homodimer.

It localises to the cytoplasm. The catalysed reaction is dUMP + (6R)-5,10-methylene-5,6,7,8-tetrahydrofolate = 7,8-dihydrofolate + dTMP. It functions in the pathway pyrimidine metabolism; dTTP biosynthesis. Its function is as follows. Catalyzes the reductive methylation of 2'-deoxyuridine-5'-monophosphate (dUMP) to 2'-deoxythymidine-5'-monophosphate (dTMP) while utilizing 5,10-methylenetetrahydrofolate (mTHF) as the methyl donor and reductant in the reaction, yielding dihydrofolate (DHF) as a by-product. This enzymatic reaction provides an intracellular de novo source of dTMP, an essential precursor for DNA biosynthesis. In Sphingopyxis alaskensis (strain DSM 13593 / LMG 18877 / RB2256) (Sphingomonas alaskensis), this protein is Thymidylate synthase.